The sequence spans 151 residues: Large ribosomal subunit protein uL23m (151 aa).

Basic and acidic residues predominate over residues D120–P143. The disordered stretch occupies residues D120–I151.

Belongs to the universal ribosomal protein uL23 family. In terms of assembly, component of the mitochondrial ribosome large subunit (39S) which comprises a 16S rRNA and about 50 distinct proteins.

Its subcellular location is the mitochondrion. In Anopheles gambiae (African malaria mosquito), this protein is Large ribosomal subunit protein uL23m (mRpL23).